A 236-amino-acid chain; its full sequence is Eukaryotic translation initiation factor 3 subunit J (236 aa).

2 disordered regions span residues 1–88 (MADD…LANM) and 188–236 (SEKQ…DDFM). Residues 28–46 (GEDDDEDVKESWEDEEEKK) show a composition bias toward acidic residues. Basic and acidic residues-rich tracts occupy residues 47-58 (DEEKPTKTEAPV), 68-88 (AKLE…LANM), and 188-197 (SEKQKMEKAN). 2 coiled-coil regions span residues 61–112 (KPNK…LKSA) and 174–209 (ADIK…KGKV). The segment covering 201-210 (SAAKAKGKVS) has biased composition (basic residues).

Belongs to the eIF-3 subunit J family. Component of the eukaryotic translation initiation factor 3 (eIF-3) complex. The eIF-3 complex interacts with pix.

Its subcellular location is the cytoplasm. In terms of biological role, component of the eukaryotic translation initiation factor 3 (eIF-3) complex, which is involved in protein synthesis of a specialized repertoire of mRNAs and, together with other initiation factors, stimulates binding of mRNA and methionyl-tRNAi to the 40S ribosome. The eIF-3 complex specifically targets and initiates translation of a subset of mRNAs involved in cell proliferation. The chain is Eukaryotic translation initiation factor 3 subunit J from Drosophila virilis (Fruit fly).